The chain runs to 464 residues: Chaperone SurA (464 aa).

Positions 1-25 (MTRYFSIVLSLLLAVSCVFLPVASA) are cleaved as a signal peptide. 2 PpiC domains span residues 175–277 (GAQY…KLVE) and 292–391 (ATEY…QRLG). A disordered region spans residues 439–464 (PADDHQTPSAAVIPATGAVLPSATKH).

Its subcellular location is the periplasm. The catalysed reaction is [protein]-peptidylproline (omega=180) = [protein]-peptidylproline (omega=0). Its function is as follows. Chaperone involved in the correct folding and assembly of outer membrane proteins. Recognizes specific patterns of aromatic residues and the orientation of their side chains, which are found more frequently in integral outer membrane proteins. May act in both early periplasmic and late outer membrane-associated steps of protein maturation. The polypeptide is Chaperone SurA (Xylella fastidiosa (strain 9a5c)).